We begin with the raw amino-acid sequence, 92 residues long: Small ribosomal subunit protein bS20 (92 aa).

Residues 1–20 are disordered; it reads MANIASAKKRARQAENNRAH.

This sequence belongs to the bacterial ribosomal protein bS20 family.

Functionally, binds directly to 16S ribosomal RNA. The polypeptide is Small ribosomal subunit protein bS20 (Methylococcus capsulatus (strain ATCC 33009 / NCIMB 11132 / Bath)).